The sequence spans 699 residues: Endogenous retrovirus group K member 8 Env polyprotein (699 aa).

The segment at 1–47 (MNPSEMQRKAPPRRRRHRNRAPLTHKMNKMVTSEEQMKLPSTKKAEP) is disordered. Positions 1 to 89 (MNPSEMQRKA…ALMIVSMVVS (89 aa)) are cleaved as a signal peptide. Residues 10-20 (APPRRRRHRNR) show a composition bias toward basic residues. The Extracellular segment spans residues 90-632 (LPMPAGAAVA…NLNPVTWVKT (543 aa)). Asn-100, Asn-128, Asn-153, Asn-274, Asn-355, Asn-372, and Asn-461 each carry an N-linked (GlcNAc...) asparagine glycan. Positions 466 to 486 (FIFTLIAVIMGLIAVTATAAV) are fusion peptide. Asn-507, Asn-554, Asn-566, and Asn-585 each carry an N-linked (GlcNAc...) asparagine glycan. Residues 633-653 (IGSTTIINLILILVCLFCLLL) form a helical membrane-spanning segment. Residues 654–699 (VCRCTQQLRRDSDHRERAMMTMAVLSKRKGGNVGKSKRDQIVTVSV) are Cytoplasmic-facing.

It belongs to the beta type-B retroviral envelope protein family. HERV class-II K(HML-2) env subfamily. The surface (SU) and transmembrane (TM) proteins form a heterodimer. SU and TM are attached by noncovalent interactions or by a labile interchain disulfide bond. Specific enzymatic cleavages in vivo yield the mature SU and TM proteins.

The protein localises to the cell membrane. It is found in the virion. In terms of biological role, retroviral envelope proteins mediate receptor recognition and membrane fusion during early infection. Endogenous envelope proteins may have kept, lost or modified their original function during evolution. This endogenous envelope protein has lost its original fusogenic properties. Functionally, SU mediates receptor recognition. TM anchors the envelope heterodimer to the viral membrane through one transmembrane domain. The other hydrophobic domain, called fusion peptide, mediates fusion of the viral membrane with the target cell membrane. This is Endogenous retrovirus group K member 8 Env polyprotein (ERVK-8) from Homo sapiens (Human).